A 225-amino-acid chain; its full sequence is Putative N-acetylmannosamine-6-phosphate 2-epimerase (225 aa).

The protein belongs to the NanE family.

It catalyses the reaction an N-acyl-D-glucosamine 6-phosphate = an N-acyl-D-mannosamine 6-phosphate. The protein operates within amino-sugar metabolism; N-acetylneuraminate degradation; D-fructose 6-phosphate from N-acetylneuraminate: step 3/5. Its function is as follows. Converts N-acetylmannosamine-6-phosphate (ManNAc-6-P) to N-acetylglucosamine-6-phosphate (GlcNAc-6-P). The protein is Putative N-acetylmannosamine-6-phosphate 2-epimerase of Vibrio vulnificus (strain CMCP6).